A 382-amino-acid chain; its full sequence is MAINLFTSESVSEGHPDKIADQISDAVLDEILKQDPKARVACETYVKTGMALVGGEITTSAWVDIENLTRQVICDIGYTHSDMGFDAHSCAVLNAIGKQSPDINQGVDRANPLEQGAGDQGIMFGYATNETEVLMPAPITYAHRLMEQQAKVRKSGKLDWLRPDAKSQLTFIYEDNKIKGIDTVVLSTQHAEHVDQKTVFEGVMEEIIKPILPSEWLSQNTKYFINPTGRFVIGGPMGDCGLTGRKIIVDTYGGAARHGGGAFSGKDPSKVDRSAAYAARYVAKNIVAAGLADRCEIQLSYAIGIAEPTSIMVETFGTGKVSNEVFVRLVREHFDLRPYGLIKMLDLIRPIYRETAAYGHFGREHFPWEKTDKAEALKSALR.

An ATP-binding site is contributed by His15. Asp17 serves as a coordination point for Mg(2+). Glu43 lines the K(+) pocket. The L-methionine site is built by Glu56 and Gln99. Positions 99-109 (QSPDINQGVDR) are flexible loop. Residues 164–166 (DAK), 230–231 (RF), Asp239, 245–246 (RK), Ala262, and Lys266 contribute to the ATP site. Asp239 contacts L-methionine. Lys270 is a binding site for L-methionine.

Belongs to the AdoMet synthase family. As to quaternary structure, homotetramer; dimer of dimers. The cofactor is Mg(2+). It depends on K(+) as a cofactor.

It localises to the cytoplasm. It carries out the reaction L-methionine + ATP + H2O = S-adenosyl-L-methionine + phosphate + diphosphate. The protein operates within amino-acid biosynthesis; S-adenosyl-L-methionine biosynthesis; S-adenosyl-L-methionine from L-methionine: step 1/1. In terms of biological role, catalyzes the formation of S-adenosylmethionine (AdoMet) from methionine and ATP. The overall synthetic reaction is composed of two sequential steps, AdoMet formation and the subsequent tripolyphosphate hydrolysis which occurs prior to release of AdoMet from the enzyme. The polypeptide is S-adenosylmethionine synthase (Glaesserella parasuis serovar 5 (strain SH0165) (Haemophilus parasuis)).